The following is a 115-amino-acid chain: Transcriptional regulator protein FixT (115 aa).

In terms of assembly, interacts directly with FixL.

Prevents transcription of the intermediate key regulatory genes nifA and fixK by counteracting the activity of the FixLJ two-component system. Acts as an inhibitor of the sensor hemoprotein kinase fixL, preventing the production or the accumulation of its phosphorylated form. The protein is Transcriptional regulator protein FixT (fixT) of Rhizobium meliloti (strain 1021) (Ensifer meliloti).